A 453-amino-acid chain; its full sequence is Transmembrane protease serine 3 (453 aa).

The Cytoplasmic portion of the chain corresponds to 1-48 (MGENDPPAAEAPFSFRSLFGLDDLKISPVAPDGDAVAAQILSLLPLKF). The chain crosses the membrane as a helical; Signal-anchor for type II membrane protein span at residues 49–69 (FPIIVIGIIALILALAIGLGI). Residues 70 to 453 (HFDCSGKYRC…HEQLERDLKT (384 aa)) are Extracellular-facing. Residues 72–108 (DCSGKYRCHSSFKCIELTARCDGVSDCKNAEDEYRCV) enclose the LDL-receptor class A domain. 10 disulfides stabilise this stretch: cysteine 73/cysteine 85, cysteine 79/cysteine 98, cysteine 92/cysteine 107, cysteine 129/cysteine 194, cysteine 142/cysteine 204, cysteine 207/cysteine 324, cysteine 242/cysteine 258, cysteine 338/cysteine 406, cysteine 369/cysteine 385, and cysteine 396/cysteine 424. Residues 104–205 (EYRCVRVSGQ…SGHVVTLKCS (102 aa)) form the SRCR domain. Positions 217–448 (IVGGNMSSLT…FLDWIHEQLE (232 aa)) constitute a Peptidase S1 domain. N-linked (GlcNAc...) asparagine glycosylation occurs at asparagine 221. Residues histidine 257 and aspartate 304 each act as charge relay system in the active site. Catalysis depends on serine 400, which acts as the Charge relay system.

This sequence belongs to the peptidase S1 family. In terms of processing, undergoes autoproteolytic activation. As to expression, strongly expressed in liver, cochlea, brain, cerebellum, spleen, lung, and muscle and at a lower degree in retina, kidney, and heart. Expressed in the spiral ganglion, the cells supporting the organ of Corti and the stria vascularis. Isoform 2 is strongly expressed only in the cochlea with very faint expression in the cerebellum, spleen and muscle.

Its subcellular location is the endoplasmic reticulum membrane. Its function is as follows. Probable serine protease that plays a role in hearing. Acts as a permissive factor for cochlear hair cell survival and activation at the onset of hearing and is required for saccular hair cell survival. Activates ENaC (in vitro). In Mus musculus (Mouse), this protein is Transmembrane protease serine 3 (Tmprss3).